A 259-amino-acid polypeptide reads, in one-letter code: uncharacterized protein (259 aa).

A Radical SAM core domain is found at 19–249 (TKIPGAKYVI…DEVINTIKKK (231 aa)). The [4Fe-4S] cluster site is built by Cys-34, Cys-38, and Cys-41.

The cofactor is [4Fe-4S] cluster.

This is an uncharacterized protein from Methanocaldococcus jannaschii (strain ATCC 43067 / DSM 2661 / JAL-1 / JCM 10045 / NBRC 100440) (Methanococcus jannaschii).